The chain runs to 536 residues: Cytochrome P450 monooxygenase fscF (536 aa).

Residues 9-29 (VSWLCALFTAIALYCIAVAFY) form a helical membrane-spanning segment. A heme-binding site is contributed by Cys-464.

The protein belongs to the cytochrome P450 family. Heme is required as a cofactor.

It is found in the membrane. Its pathway is secondary metabolite biosynthesis. Cytochrome P450 monooxygenase; part of the fragmented gene cluster that mediates the biosynthesis of fusarochromene, a tryptophan-derived metabolite closely related to a group of mycotoxins including fusarochromanone. Within the pathway, fscF catalyzes the epoxidation of desacetylfusarochromene which opens the way to the production of fusarochromanones. The first step of the pathway is the epimerization of L-tryptophan to D-tryptophan in the presence of the NRPS-like tryptophan epimerase fscC. D-tryptophan is subsequently hydroxylated by the tryptophan 6-hydroxylase fscE to yield 6-hydroxytryptophan. The pyrrole ring undergoes cleavaged by the tryptophan 2,3-dioxygenase fscD and is finally converted to 4-hydroxykyrunenine by the hydrolase fscH. The NRPS-like oxidoreductase fscA reduces the carboxyl group to primary alcohol and the DMATS-type prenyltransferase fscG performs prenylation, followed by the formation of a chromene ring catalyzed by the oxidoreductase fscI, which leads to desacetylfusarochromene. Epoxidation by fscF and rearrangement reactions of chromene double bonds convert compound desacetylfusarochromene to fusarochromanones. Although specific acetyltransferases were not found near the fsc gene cluster, several predicted enzymes containing the N-acetyltransferase superfamily domain are present in the genome of F.equiseti. These predicted enzymes may have the potential to convert desacetylfusarochromene to fusarochromene. This is Cytochrome P450 monooxygenase fscF from Fusarium equiseti (Fusarium scirpi).